The following is a 788-amino-acid chain: uncharacterized protein (788 aa).

An Adrift-type SAM-dependent 2'-O-MTase domain is found at 485-693 (EMITTAWIKL…IYIVLKSYKG (209 aa)). S-adenosyl-L-methionine-binding residues include Gly521 and Asp604. Lys645 serves as the catalytic Proton acceptor.

This is an uncharacterized protein from Acanthamoeba polyphaga (Amoeba).